The following is a 432-amino-acid chain: Histidinol dehydrogenase (432 aa).

NAD(+) contacts are provided by Tyr-130, Gln-191, and Asn-214. Substrate is bound by residues Ser-237, Gln-259, and His-262. Zn(2+) contacts are provided by Gln-259 and His-262. Active-site proton acceptor residues include Glu-327 and His-328. Substrate is bound by residues His-328, Asp-361, Glu-415, and His-420. Asp-361 contacts Zn(2+). Position 420 (His-420) interacts with Zn(2+).

It belongs to the histidinol dehydrogenase family. It depends on Zn(2+) as a cofactor.

It catalyses the reaction L-histidinol + 2 NAD(+) + H2O = L-histidine + 2 NADH + 3 H(+). Its pathway is amino-acid biosynthesis; L-histidine biosynthesis; L-histidine from 5-phospho-alpha-D-ribose 1-diphosphate: step 9/9. Catalyzes the sequential NAD-dependent oxidations of L-histidinol to L-histidinaldehyde and then to L-histidine. The polypeptide is Histidinol dehydrogenase (Agrobacterium fabrum (strain C58 / ATCC 33970) (Agrobacterium tumefaciens (strain C58))).